The following is an 86-amino-acid chain: Small ribosomal subunit protein uS15 (86 aa).

It belongs to the universal ribosomal protein uS15 family. In terms of assembly, part of the 30S ribosomal subunit. Forms a bridge to the 50S subunit in the 70S ribosome, contacting the 23S rRNA.

One of the primary rRNA binding proteins, it binds directly to 16S rRNA where it helps nucleate assembly of the platform of the 30S subunit by binding and bridging several RNA helices of the 16S rRNA. Its function is as follows. Forms an intersubunit bridge (bridge B4) with the 23S rRNA of the 50S subunit in the ribosome. The polypeptide is Small ribosomal subunit protein uS15 (Ruthia magnifica subsp. Calyptogena magnifica).